We begin with the raw amino-acid sequence, 77 residues long: Large ribosomal subunit protein bL31 (77 aa).

This sequence belongs to the bacterial ribosomal protein bL31 family. Type A subfamily. Part of the 50S ribosomal subunit.

Binds the 23S rRNA. This Microcystis aeruginosa (strain NIES-843 / IAM M-2473) protein is Large ribosomal subunit protein bL31.